A 185-amino-acid polypeptide reads, in one-letter code: Ribosome maturation factor RimM (185 aa).

In terms of domain architecture, PRC barrel spans 106–185 (TGDYYWKDLI…TIEVDWDPGF (80 aa)).

This sequence belongs to the RimM family. In terms of assembly, binds ribosomal protein uS19.

Its subcellular location is the cytoplasm. In terms of biological role, an accessory protein needed during the final step in the assembly of 30S ribosomal subunit, possibly for assembly of the head region. Essential for efficient processing of 16S rRNA. May be needed both before and after RbfA during the maturation of 16S rRNA. It has affinity for free ribosomal 30S subunits but not for 70S ribosomes. In Photorhabdus laumondii subsp. laumondii (strain DSM 15139 / CIP 105565 / TT01) (Photorhabdus luminescens subsp. laumondii), this protein is Ribosome maturation factor RimM.